Consider the following 382-residue polypeptide: Succinate--CoA ligase [ADP-forming] subunit beta (382 aa).

Residues 9 to 240 (KELFSKYGVK…PRDVSEFEMY (232 aa)) enclose the ATP-grasp domain. Residues Lys-45, 52 to 54 (GRG), Val-94, and Glu-99 each bind ATP. Mg(2+) contacts are provided by Asn-193 and Asp-207. Substrate is bound by residues Asn-260 and 317-319 (GIT).

This sequence belongs to the succinate/malate CoA ligase beta subunit family. In terms of assembly, heterotetramer of two alpha and two beta subunits. Mg(2+) serves as cofactor.

The enzyme catalyses succinate + ATP + CoA = succinyl-CoA + ADP + phosphate. It carries out the reaction GTP + succinate + CoA = succinyl-CoA + GDP + phosphate. It functions in the pathway carbohydrate metabolism; tricarboxylic acid cycle; succinate from succinyl-CoA (ligase route): step 1/1. Its function is as follows. Succinyl-CoA synthetase functions in the citric acid cycle (TCA), coupling the hydrolysis of succinyl-CoA to the synthesis of either ATP or GTP and thus represents the only step of substrate-level phosphorylation in the TCA. The beta subunit provides nucleotide specificity of the enzyme and binds the substrate succinate, while the binding sites for coenzyme A and phosphate are found in the alpha subunit. The chain is Succinate--CoA ligase [ADP-forming] subunit beta from Pyrobaculum arsenaticum (strain DSM 13514 / JCM 11321 / PZ6).